The sequence spans 396 residues: Tryptophan synthase beta chain (396 aa).

Lys86 bears the N6-(pyridoxal phosphate)lysine mark.

The protein belongs to the TrpB family. Tetramer of two alpha and two beta chains. Requires pyridoxal 5'-phosphate as cofactor.

The catalysed reaction is (1S,2R)-1-C-(indol-3-yl)glycerol 3-phosphate + L-serine = D-glyceraldehyde 3-phosphate + L-tryptophan + H2O. It participates in amino-acid biosynthesis; L-tryptophan biosynthesis; L-tryptophan from chorismate: step 5/5. Functionally, the beta subunit is responsible for the synthesis of L-tryptophan from indole and L-serine. This is Tryptophan synthase beta chain from Photobacterium profundum (strain SS9).